Reading from the N-terminus, the 316-residue chain is Aquaglyceroporin-2 (316 aa).

The segment at 1–31 is disordered; the sequence is MADERGPINKSGPSSTYGATENNGESGGTRG. Residues 1 to 59 lie on the Cytoplasmic side of the membrane; the sequence is MADERGPINKSGPSSTYGATENNGESGGTRGAPATEDVIVIQDSGWYYIKFRFKEPFAE. Residues 11–24 show a composition bias toward polar residues; sequence SGPSSTYGATENNG. The helical transmembrane segment at 60 to 80 threads the bilayer; that stretch reads FLGTFILVAFGVGAIAQTVLS. Residues 81 to 86 are Extracellular-facing; it reads KGATGN. Residues 87-107 traverse the membrane as a helical segment; it reads WITIALGFGLGLALGIAVSGH. The Cytoplasmic portion of the chain corresponds to 108–131; the sequence is YSGGHLNPAVTITLAIYRKFPWVK. The NPA 1 signature appears at 114-116; the sequence is NPA. The chain crosses the membrane as a helical span at residues 132–152; that stretch reads VPVYITAQVLGAFVAAAVIYL. The Extracellular segment spans residues 153-187; the sequence is NYLPAIYNFAGDKRDVIGANATAGIFATYPQPFMS. The N-linked (GlcNAc...) asparagine glycan is linked to N172. A helical transmembrane segment spans residues 188-208; that stretch reads IGGAFFSEALGTFFLLFVILA. At 209 to 219 the chain is on the cytoplasmic side; it reads MTDERNVPTTR. Residues 220–240 form a helical membrane-spanning segment; the sequence is IVAPITIGLTLTAIAISLGFE. Residues 241–271 lie on the Extracellular side of the membrane; the sequence is TGFSLNAARDFGPRLFTFFIGYGVEVFTAYK. An NPA 2 motif is present at residues 246–248; it reads NAA. The chain crosses the membrane as a helical span at residues 272 to 292; it reads FYFWIPLVAPIVGGLVAGFVY. Residues 293–316 are Cytoplasmic-facing; that stretch reads DSLLYWGEKSFLNKNVHHEHRAVA.

The protein belongs to the MIP/aquaporin (TC 1.A.8) family.

The protein localises to the cell membrane. It is found in the membrane. The enzyme catalyses H2O(in) = H2O(out). It catalyses the reaction glycerol(in) = glycerol(out). With respect to regulation, polyethylene glycol (PEG) stimulates whereas glycerol inhibits the aquaporin activity. Water channel required to facilitate the transport of water across membranes. Stimulates plant drought tolerance by facilitating the transport of water from the arbuscular mycorrhiza fungus to host plants. The chain is Aquaglyceroporin-2 from Rhizophagus irregularis (Arbuscular mycorrhizal fungus).